We begin with the raw amino-acid sequence, 157 residues long: Protein MGF 110-13L (157 aa).

The next 2 membrane-spanning stretches (helical) occupy residues 14 to 34 (QYCL…CALC) and 39 to 59 (LSTT…AQPV).

Belongs to the asfivirus MGF 110 family.

It is found in the host membrane. In terms of biological role, plays a role in virus cell tropism, and may be required for efficient virus replication in macrophages. The protein is Protein MGF 110-13L of African swine fever virus (isolate Tick/Malawi/Lil 20-1/1983) (ASFV).